We begin with the raw amino-acid sequence, 208 residues long: Ribosomal RNA large subunit methyltransferase E (208 aa).

The S-adenosyl-L-methionine site is built by G63, W65, D83, D99, and D124. Residue K164 is the Proton acceptor of the active site.

It belongs to the class I-like SAM-binding methyltransferase superfamily. RNA methyltransferase RlmE family.

It is found in the cytoplasm. The enzyme catalyses uridine(2552) in 23S rRNA + S-adenosyl-L-methionine = 2'-O-methyluridine(2552) in 23S rRNA + S-adenosyl-L-homocysteine + H(+). Its function is as follows. Specifically methylates the uridine in position 2552 of 23S rRNA at the 2'-O position of the ribose in the fully assembled 50S ribosomal subunit. The sequence is that of Ribosomal RNA large subunit methyltransferase E from Hamiltonella defensa subsp. Acyrthosiphon pisum (strain 5AT).